The sequence spans 384 residues: Glucans biosynthesis protein C (384 aa).

10 consecutive transmembrane segments (helical) span residues 17–37 (AWLM…THSW), 54–74 (FIHA…SYML), 91–111 (VGIP…ILLQ), 140–160 (LWFL…FTWF), 173–193 (AISL…YAAI), 212–232 (FIVM…LAFI), 240–260 (FTTP…AYLL), 274–294 (TESV…FSLG), 311–331 (ASLF…AYIT), and 338–358 (LIGF…LYEI).

Belongs to the acyltransferase 3 family. OpgC subfamily.

It localises to the cell membrane. Its pathway is glycan metabolism; osmoregulated periplasmic glucan (OPG) biosynthesis. Functionally, necessary for the succinyl substitution of periplasmic glucans. Could catalyze the transfer of succinyl residues from the cytoplasmic side of the membrane to the nascent glucan backbones on the periplasmic side of the membrane. The polypeptide is Glucans biosynthesis protein C (Salmonella gallinarum (strain 287/91 / NCTC 13346)).